The sequence spans 363 residues: MSEHAGEIRVAIVGVGNCASSLVQGVQYYRNADENTTVPGLMHVKFGPYHVRDVNFVAAFDVDAKKVGFDLSEAIFASENNTIKIADVPPTDVIVQRGPTLDGIGKYYADTIEVSDAEPVDVVKVLKEAEVDVLVSYLPVGSEEADKFYAQCAIDAGVAFVNALPVFIASDPVWAKKFEDAGVPIVGDDIKSQVGATITHRVMAKLFEDRGVTLDRTYQLNVGGNMDFLNMLERSRLESKKVSKTQAVTSNLSGALAGKVEDKNVHIGPSDHVAWLDDRKWAYVRLEGRAFGDVPLNLEYKLEVWDSPNSAGVIIDAVRAAKIAKDRGIGGPIEAASAYLMKSPPKQLADDVARAELETFIEG.

Lys65 participates in a covalent cross-link: Isoglutamyl lysine isopeptide (Lys-Gln) (interchain with Q-Cter in protein Pup). NAD(+) is bound by residues Asp70, Ala129, Tyr149, Ser192, Asp227, and Lys240.

The protein belongs to the myo-inositol 1-phosphate synthase family. NAD(+) serves as cofactor. Post-translationally, pupylated at Lys-65 by the prokaryotic ubiquitin-like protein Pup, which leads to its degradation by the proteasome.

The catalysed reaction is D-glucose 6-phosphate = 1D-myo-inositol 3-phosphate. In terms of biological role, key enzyme in myo-inositol biosynthesis pathway that catalyzes the conversion of glucose 6-phosphate to 1D-myo-inositol 3-phosphate in a NAD-dependent manner. The protein is Inositol-3-phosphate synthase (ino1) of Mycolicibacterium smegmatis (strain ATCC 700084 / mc(2)155) (Mycobacterium smegmatis).